A 37-amino-acid polypeptide reads, in one-letter code: TVSDPPARPAVFHSREELMNYVRELNLYFAIVGRPRY.

Tyr37 bears the Tyrosine amide mark.

The protein belongs to the NPY family. In terms of tissue distribution, expressed by the venom duct.

The protein resides in the secreted. Causes hyperactivity such as jumping, rapid circling and tail flicking, after intraventicular injection into mouse brain. The protein is Neuropeptide Y2-like conopeptide of Conus betulinus (Beech cone).